We begin with the raw amino-acid sequence, 390 residues long: Isotocin receptor (390 aa).

Residues 1–48 are Extracellular-facing; that stretch reads MEEMFKEQDFWSFNESSRNSTVGNETFGGNQTVNPLKRNEEVAKVEVT. Residues N14, N19, N24, and N30 are each glycosylated (N-linked (GlcNAc...) asparagine). Residues 49–69 traverse the membrane as a helical segment; it reads VLALVLFLALAGNLCVLIAIY. Residues 70-86 are Cytoplasmic-facing; the sequence is TAKHTQSRMYYLMKHLS. Residues 87-107 form a helical membrane-spanning segment; the sequence is IADLVVAVFQVLPQLIWDITF. Residues 108 to 124 are Extracellular-facing; that stretch reads RFYGPDFLCRLVKYLQT. C116 and C191 are disulfide-bonded. The chain crosses the membrane as a helical span at residues 125–145; the sequence is VGMFASTYMLVLMSIDRCIAI. Residues 146–160 lie on the Cytoplasmic side of the membrane; the sequence is CQPLRSLHKRKDRCY. Residues 161–181 form a helical membrane-spanning segment; it reads VIVSWALSLVFSVPQVYIFSL. At 182-206 the chain is on the extracellular side; the sequence is REIGNGVYDCWGDFVQPWGAKAYIT. The helical transmembrane segment at 207–227 threads the bilayer; that stretch reads WISLTIYIIPVAILGGCYGLI. Over 228 to 276 the chain is Cytoplasmic; sequence SFKIWQNFKRKTKKDQCITLTTAASKANALARVSSVKLVSKAKITTVKM. A helical membrane pass occupies residues 277-297; that stretch reads TFVIVLAYIVCWTPFFFVQMW. Over 298-311 the chain is Extracellular; sequence SAWDPEAPREAMPF. A helical membrane pass occupies residues 312–332; sequence IISMLLASLNSCCNPWIYMFF. The Cytoplasmic segment spans residues 333-390; sequence AGHLFHDLKQSLLCCSTLYLKSSQCRCDQEHDSRKSNCSTYVIKSTSSQRSITQSSIT.

This sequence belongs to the G-protein coupled receptor 1 family. Vasopressin/oxytocin receptor subfamily. As to expression, expressed in brain, intestine, bladder, skeletal muscle, lateral line, gills and kidney.

It is found in the cell membrane. Binds to isotocin. Can also be activated by vasotocin, mesotocin, oxytocin and Arg-vasopressin, although these have lower potencies than isotocin. Produces an induction of membrane chloride currents indicating that it is coupled to the inositol phosphate/calcium pathway. The polypeptide is Isotocin receptor (Catostomus commersonii (White sucker)).